The sequence spans 277 residues: Proteasome subunit beta type-7 (277 aa).

A propeptide spans 1–43 (MAAVSVYAPPVGGFSFDNCRRNAVLEADFAKRGYKLPKVRKTG) (removed in mature form). Threonine 44 acts as the Nucleophile in catalysis.

It belongs to the peptidase T1B family. The 26S proteasome consists of a 20S proteasome core and two 19S regulatory subunits. The 20S proteasome core is a barrel-shaped complex made of 28 subunits that are arranged in four stacked rings. The two outer rings are each formed by seven alpha subunits, and the two inner rings are formed by seven beta subunits. The proteolytic activity is exerted by three beta-subunits PSMB5, PSMB6 and PSMB7. As to quaternary structure, (Microbial infection) Interacts with HIV-1 Tat protein. Expressed at a low level in colonic mucosa. Up-regulated in colorectal cancer tissues.

The protein localises to the cytoplasm. The protein resides in the nucleus. The catalysed reaction is Cleavage of peptide bonds with very broad specificity.. In terms of biological role, component of the 20S core proteasome complex involved in the proteolytic degradation of most intracellular proteins. This complex plays numerous essential roles within the cell by associating with different regulatory particles. Associated with two 19S regulatory particles, forms the 26S proteasome and thus participates in the ATP-dependent degradation of ubiquitinated proteins. The 26S proteasome plays a key role in the maintenance of protein homeostasis by removing misfolded or damaged proteins that could impair cellular functions, and by removing proteins whose functions are no longer required. Associated with the PA200 or PA28, the 20S proteasome mediates ubiquitin-independent protein degradation. This type of proteolysis is required in several pathways including spermatogenesis (20S-PA200 complex) or generation of a subset of MHC class I-presented antigenic peptides (20S-PA28 complex). Within the 20S core complex, PSMB7 displays a trypsin-like activity. The sequence is that of Proteasome subunit beta type-7 from Homo sapiens (Human).